An 82-amino-acid polypeptide reads, in one-letter code: Exodeoxyribonuclease 7 small subunit (82 aa).

It belongs to the XseB family. Heterooligomer composed of large and small subunits.

Its subcellular location is the cytoplasm. The catalysed reaction is Exonucleolytic cleavage in either 5'- to 3'- or 3'- to 5'-direction to yield nucleoside 5'-phosphates.. In terms of biological role, bidirectionally degrades single-stranded DNA into large acid-insoluble oligonucleotides, which are then degraded further into small acid-soluble oligonucleotides. The polypeptide is Exodeoxyribonuclease 7 small subunit (Mannheimia succiniciproducens (strain KCTC 0769BP / MBEL55E)).